The sequence spans 137 residues: Proofreading thioesterase EntH (137 aa).

Glu63 (nucleophile or proton acceptor) is an active-site residue.

The protein belongs to the thioesterase PaaI family. In terms of assembly, homotetramer. Dimer of dimers. Interacts specifically with the aryl carrier protein (ArCP) domain of EntB.

The protein localises to the cytoplasm. It participates in siderophore biosynthesis; enterobactin biosynthesis. Its function is as follows. Required for optimal enterobactin synthesis. Acts as a proofreading enzyme that prevents EntB misacylation by hydrolyzing the thioester bound existing between EntB and wrongly charged molecules. In Enterobacter lignolyticus (strain SCF1), this protein is Proofreading thioesterase EntH.